The sequence spans 318 residues: S-adenosylmethionine/S-adenosylhomocysteine transporter (318 aa).

10 helical membrane-spanning segments follow: residues 7 to 27 (FANL…AFIW), 44 to 64 (LFVT…LLLF), 76 to 96 (VMPI…LEFI), 105 to 125 (KACF…YVQL), 134 to 154 (LGGL…GGGE), 163 to 183 (LGMP…GWTL), 193 to 213 (SLSI…LSLA), 231 to 251 (LFLQ…YNLF), 262 to 282 (FLSF…WLLL), and 285 to 305 (SFPP…RLIY). The EamA 1 domain occupies 25 to 148 (FIWSSSFALS…LGLVSYLVYL (124 aa)). The EamA 2 domain occupies 191-304 (CESLSITAIN…GFMVLGCRLI (114 aa)).

This sequence belongs to the drug/metabolite transporter (DMT) superfamily. 10 TMS drug/metabolite exporter (DME) (TC 2.A.7.3) family.

It localises to the cell membrane. In terms of biological role, transports S-adenosylmethionine (SAM) and S-adenosylhomocysteine (SAH). Allows bacteria to acquire SAM from the eukaryotic host cell and to likely remove the toxic by-product SAH. The protein is S-adenosylmethionine/S-adenosylhomocysteine transporter of Chlamydia muridarum (strain MoPn / Nigg).